A 1435-amino-acid chain; its full sequence is Trafficking protein particle complex subunit 8 (1435 aa).

Residues Ser273, Ser279, and Ser309 each carry the phosphoserine modification. The segment at 301–321 (QLEQSSDPSNSIDGPDHLRSA) is disordered. Positions 302 to 312 (LEQSSDPSNSI) are enriched in polar residues.

This sequence belongs to the TRS85 family. As to quaternary structure, component of the multisubunit TRAPP (transport protein particle) complex, which includes TRAPPC2, TRAPPC2L, TRAPPC3, TRAPPC3L, TRAPPC4, TRAPPC5, TRAPPC8, TRAPPC9, TRAPPC10, TRAPPC11 and TRAPPC12. Interacts with TBC1D14. Interacts (via C-terminus) with TMEM131 (via C-terminus); the interaction is direct and is involved in collagen secretion.

The protein resides in the golgi apparatus. It is found in the cis-Golgi network. Plays a role in endoplasmic reticulum to Golgi apparatus trafficking at a very early stage. Maintains together with TBC1D14 the cycling pool of ATG9 required for initiation of autophagy. Involved in collagen secretion. This Homo sapiens (Human) protein is Trafficking protein particle complex subunit 8 (TRAPPC8).